Consider the following 154-residue polypeptide: General odorant-binding protein 83a (154 aa).

A signal peptide spans 1 to 33; that stretch reads MALNGFGRRVSASVLLIALSLLSGALILPPAAA. Cystine bridges form between Cys55-Cys86, Cys82-Cys133, and Cys124-Cys142.

The protein belongs to the PBP/GOBP family. In the ventrolateral region of the antenna, expressed in two distinct types of olfactory hairs: in most sensilla trichodea and in a subset of the small sensilla basiconica (at protein level).

It is found in the secreted. The chain is General odorant-binding protein 83a (Obp83a) from Drosophila melanogaster (Fruit fly).